The chain runs to 574 residues: E3 ubiquitin-protein ligase NEURL1 (574 aa).

Over residues 1 to 18 the composition is skewed to polar residues; the sequence is MGNNFSSVSSLQRGNPSR. Residues 1 to 53 are disordered; the sequence is MGNNFSSVSSLQRGNPSRASRGHPQNLKDSIGGSFPVPSHRCHHKQKHCPPTL. G2 carries N-myristoyl glycine lipidation. NHR domains are found at residues 61-217 and 292-447; these read TPLL…QLLD and GDLR…RILG. An RING-type zinc finger spans residues 520–560; the sequence is ECTICYEHAVDTVIYTCGHMCLCYSCGLRLKKALHACCPIC.

As to quaternary structure, interacts with CPEB3 (via N-terminal domain); the interaction increases CPEB3 ubiquitination. Interacts with DLL1. Post-translationally, myristoylation is a determinant of membrane targeting. As to expression, expressed in CA1 pyramidal neurons (at protein level). Expressed throughout the adult forebrain, including the cerebral cortex, amygdala, striatum, and CA1 area of the hippocampus. Expressed in sensory neurons of the olfactory epithelium, the vomeronasal organ, mammary gland and skeletal muscle.

Its subcellular location is the cytoplasm. It is found in the perinuclear region. The protein resides in the cell membrane. It localises to the perikaryon. The protein localises to the cell projection. Its subcellular location is the dendrite. It is found in the postsynaptic density. It catalyses the reaction S-ubiquitinyl-[E2 ubiquitin-conjugating enzyme]-L-cysteine + [acceptor protein]-L-lysine = [E2 ubiquitin-conjugating enzyme]-L-cysteine + N(6)-ubiquitinyl-[acceptor protein]-L-lysine.. It functions in the pathway protein modification; protein ubiquitination. Functionally, plays a role in hippocampal-dependent synaptic plasticity, learning and memory. Involved in the formation of spines and functional synaptic contacts by modulating the translational activity of the cytoplasmic polyadenylation element-binding protein CPEB3. Promotes ubiquitination of CPEB3, and hence induces CPEB3-dependent mRNA translation activation of glutamate receptor GRIA1 and GRIA2. Can function as an E3 ubiquitin-protein ligase to activate monoubiquitination of JAG1 (in vitro), thereby regulating the Notch pathway. Acts as a tumor suppressor; inhibits malignant cell transformation of medulloblastoma (MB) cells by inhibiting the Notch signaling pathway. This Mus musculus (Mouse) protein is E3 ubiquitin-protein ligase NEURL1 (Neurl1).